The following is a 274-amino-acid chain: Large ribosomal subunit protein uL2 (274 aa).

Disordered stretches follow at residues 36-61 (QKSK…HKQR) and 223-274 (VAMN…RRKR). Positions 37 to 46 (KSKTGGRNSN) are enriched in polar residues. Composition is skewed to basic residues over residues 50–61 (TTRHRGGGHKQR) and 254–274 (KGHK…RRKR).

The protein belongs to the universal ribosomal protein uL2 family. As to quaternary structure, part of the 50S ribosomal subunit. Forms a bridge to the 30S subunit in the 70S ribosome.

Its function is as follows. One of the primary rRNA binding proteins. Required for association of the 30S and 50S subunits to form the 70S ribosome, for tRNA binding and peptide bond formation. It has been suggested to have peptidyltransferase activity; this is somewhat controversial. Makes several contacts with the 16S rRNA in the 70S ribosome. The sequence is that of Large ribosomal subunit protein uL2 from Halorhodospira halophila (strain DSM 244 / SL1) (Ectothiorhodospira halophila (strain DSM 244 / SL1)).